The following is a 274-amino-acid chain: Tropomyosin (274 aa).

Residues 1–35 (MKLEKDNAMDRADTLEQQNKEANNRAEKSEEEVHN) are compositionally biased toward basic and acidic residues. The segment at 1–45 (MKLEKDNAMDRADTLEQQNKEANNRAEKSEEEVHNLQKRMQQLEN) is disordered. Positions 1–274 (MKLEKDNAMD…DQTFSELSGY (274 aa)) form a coiled coil.

This sequence belongs to the tropomyosin family. Homodimer.

In terms of biological role, tropomyosin, in association with the troponin complex, plays a central role in the calcium dependent regulation of muscle contraction. The protein is Tropomyosin of Metapenaeus ensis (Greasyback shrimp).